The sequence spans 299 residues: Protein sprouty homolog 4 (299 aa).

Met-1 bears the N-acetylmethionine mark. Disordered stretches follow at residues 50–79 and 92–127; these read NDYI…PTPA and FSGR…ASPR. The span at 92-107 shows a compositional bias: low complexity; the sequence is FSGRPSSVSSSSSTSS. Residue Ser-125 is modified to Phosphoserine. An SPR domain is found at 166–273; sequence KCKECASPRT…GYDRLRRPGC (108 aa).

It belongs to the sprouty family. In terms of assembly, interacts (via C-terminus) with TESK1 (via both C- and N-termini); the interaction inhibits TESK1 kinase activity. Interacts with RAF1. Interacts with CAV1 (via C-terminus).

Its subcellular location is the cytoplasm. The protein resides in the cell projection. It is found in the ruffle membrane. Suppresses the insulin receptor and EGFR-transduced MAPK signaling pathway, but does not inhibit MAPK activation by a constitutively active mutant Ras. Probably impairs the formation of GTP-Ras. Inhibits Ras-independent, but not Ras-dependent, activation of RAF1. Represses integrin-mediated cell spreading via inhibition of TESK1-mediated phosphorylation of cofilin. The protein is Protein sprouty homolog 4 (SPRY4) of Bos taurus (Bovine).